The chain runs to 944 residues: 2-oxoglutarate dehydrogenase E1 component (944 aa).

A disordered region spans residues 918–944; the sequence is SSTAEGDPTVHKKEQERIVSDSLTRKN. Residues 925–936 are compositionally biased toward basic and acidic residues; it reads PTVHKKEQERIV.

Belongs to the alpha-ketoglutarate dehydrogenase family. Homodimer. Part of the 2-oxoglutarate dehydrogenase (OGDH) complex composed of E1 (2-oxoglutarate dehydrogenase), E2 (dihydrolipoamide succinyltransferase) and E3 (dihydrolipoamide dehydrogenase); the complex contains multiple copies of the three enzymatic components (E1, E2 and E3). The cofactor is thiamine diphosphate.

The catalysed reaction is N(6)-[(R)-lipoyl]-L-lysyl-[protein] + 2-oxoglutarate + H(+) = N(6)-[(R)-S(8)-succinyldihydrolipoyl]-L-lysyl-[protein] + CO2. E1 component of the 2-oxoglutarate dehydrogenase (OGDH) complex which catalyzes the decarboxylation of 2-oxoglutarate, the first step in the conversion of 2-oxoglutarate to succinyl-CoA and CO(2). This Bacillus pumilus (strain SAFR-032) protein is 2-oxoglutarate dehydrogenase E1 component.